Consider the following 482-residue polypeptide: Glycogen synthase (482 aa).

Residue Lys-15 participates in ADP-alpha-D-glucose binding.

This sequence belongs to the glycosyltransferase 1 family. Bacterial/plant glycogen synthase subfamily.

It catalyses the reaction [(1-&gt;4)-alpha-D-glucosyl](n) + ADP-alpha-D-glucose = [(1-&gt;4)-alpha-D-glucosyl](n+1) + ADP + H(+). It functions in the pathway glycan biosynthesis; glycogen biosynthesis. Functionally, synthesizes alpha-1,4-glucan chains using ADP-glucose. In Elusimicrobium minutum (strain Pei191), this protein is Glycogen synthase.